The primary structure comprises 317 residues: Aspartate carbamoyltransferase catalytic subunit (317 aa).

Carbamoyl phosphate-binding residues include Arg-66 and Thr-67. An L-aspartate-binding site is contributed by Lys-94. Carbamoyl phosphate contacts are provided by Arg-116, His-144, and Gln-147. L-aspartate is bound by residues Arg-177 and Arg-231. Positions 272 and 273 each coordinate carbamoyl phosphate.

This sequence belongs to the aspartate/ornithine carbamoyltransferase superfamily. ATCase family. Heterododecamer (2C3:3R2) of six catalytic PyrB chains organized as two trimers (C3), and six regulatory PyrI chains organized as three dimers (R2).

The catalysed reaction is carbamoyl phosphate + L-aspartate = N-carbamoyl-L-aspartate + phosphate + H(+). Its pathway is pyrimidine metabolism; UMP biosynthesis via de novo pathway; (S)-dihydroorotate from bicarbonate: step 2/3. Its function is as follows. Catalyzes the condensation of carbamoyl phosphate and aspartate to form carbamoyl aspartate and inorganic phosphate, the committed step in the de novo pyrimidine nucleotide biosynthesis pathway. This Bradyrhizobium sp. (strain BTAi1 / ATCC BAA-1182) protein is Aspartate carbamoyltransferase catalytic subunit.